The sequence spans 401 residues: MSHIQIPPGLTELLQGYTVEVLRQRPPDLVDFAVDYFTRLREARSRASTPPAAPPSGSQDFDPGAGLVADAVADSESEDEEDLDVPIPGRFDRRVSVCAETYNPDEEEEDTDPRVIHPKTDQQRCRLQEACKDILLFKNLDPEQLSQVLDAMFERTVKVDEHVIDQGDDGDNFYVIERGTYDILVTKDNQTRSVGQYDNHGSFGELALMYNTPRAATIVATSEGSLWGLDRVTFRRIIVKNNAKKRKMFESFIESVPLLKSLEVSERMKIVDVIGEKVYKDGERIITQGEKADSFYIIESGEVSILIKSKTKVNKDGENQEVEIARCHKGQYFGELALVTNKPRAASAYAVGDVKCLVMDVQAFERLLGPCMDIMKRNISHYEEQLVKMFGSSMDLIDPGQ.

The residue at position 2 (Ser2) is an N-acetylserine. A dimerization and phosphorylation region spans residues 2–135; that stretch reads SHIQIPPGLT…RLQEACKDIL (134 aa). The segment at 43 to 65 is disordered; sequence ARSRASTPPAAPPSGSQDFDPGA. Over residues 46 to 58 the composition is skewed to low complexity; the sequence is RASTPPAAPPSGS. 3 positions are modified to phosphoserine: Ser48, Ser75, and Ser77. Ser96 is subject to Phosphoserine; by PKA. 3',5'-cyclic AMP-binding positions include 136-257, Glu205, Arg214, 258-401, Glu335, and Arg344; these read LFKN…ESVP and LLKS…DPGQ. Thr212 is modified (phosphothreonine; by PDPK1). A phosphoserine mark is found at Ser347 and Ser392.

Belongs to the cAMP-dependent kinase regulatory chain family. The inactive form of the enzyme is composed of two regulatory chains and two catalytic chains. Activation by cAMP produces two active catalytic monomers and a regulatory dimer that binds four cAMP molecules. Interacts with AKAP4 and CBFA2T3. Interacts with the phosphorylated form of PJA2. Interacts with MYRIP; this interaction may link PKA to components of the exocytosis machinery, thus facilitating exocytosis, including insulin release. Forms a complex composed of PRKAR2A, GSK3B and GSKIP through GSKIP interaction; facilitates PKA-induced phosphorylation and regulates GSK3B activity. Interacts with ADCY8; inhibits adenylate cyclase activity through PKA phosphorylation. A second phosphorylation site has not been located. Post-translationally, phosphorylation of Thr-212 by PDPK1 seems to attenuate the activity of PKA, perhaps by strengthening interaction between the regulatory and the catalytic subunits. In terms of tissue distribution, four types of regulatory chains are found: I-alpha, I-beta, II-alpha, and II-beta. Their expression varies among tissues and is in some cases constitutive and in others inducible.

It localises to the cytoplasm. The protein resides in the cell membrane. Functionally, regulatory subunit of the cAMP-dependent protein kinases involved in cAMP signaling in cells. Type II regulatory chains mediate membrane association by binding to anchoring proteins, including the MAP2 kinase. This Bos taurus (Bovine) protein is cAMP-dependent protein kinase type II-alpha regulatory subunit (PRKAR2A).